A 478-amino-acid polypeptide reads, in one-letter code: Receptor-interacting serine/threonine-protein kinase 3 (478 aa).

Position 2 is a phosphoserine (Ser2). The region spanning Leu22–Ile290 is the Protein kinase domain. ATP is bound by residues Val28–Val36 and Lys51. Asp143 (proton acceptor) is an active-site residue. Ser165 bears the Phosphoserine mark. The residue at position 185 (Thr185) is a Phosphothreonine. Ser201 carries the phosphoserine; by autocatalysis modification. Phosphothreonine is present on Thr228. At Ser229 the chain carries Phosphoserine; by autocatalysis. Phosphothreonine is present on Thr254. Phosphoserine occurs at positions 301 and 323. A disordered region spans residues Arg311–Asp330. The span at Ser313–Asp330 shows a compositional bias: basic and acidic residues. Phosphothreonine is present on Thr335. Residues Ser350, Ser369, and Ser380 each carry the phosphoserine modification. Residues Glu362–Asn429 form a disordered region. Positions Ala376–Gly385 are enriched in polar residues. Thr392 bears the Phosphothreonine mark. Polar residues predominate over residues Gln413–Asn429. The RIP homotypic interaction motif (RHIM) signature appears at Leu437–Arg461. Arg474 carries the post-translational modification Omega-N-methylarginine.

Belongs to the protein kinase superfamily. TKL Ser/Thr protein kinase family. Interacts (via RIP homotypic interaction motif) with RIPK1 (via RIP homotypic interaction motif); this interaction induces RIPK1 phosphorylation and formation of a RIPK1-RIPK3 necrosis-inducing complex. Interacts with MLKL; the interaction is direct and triggers necroptosis. Interacts with ZBP1 (via RIP homotypic interaction motif); interaction with ZBP1 activates RIPK3, triggering necroptosis. Upon TNF-induced necrosis, the RIPK1-RIPK3 dimer further interacts with PGAM5 and MLKL; the formation of this complex leads to PGAM5 phosphorylation and increase in PGAM5 phosphatase activity. Binds TRAF2 and is recruited to the TNFR-1 signaling complex. Interacts with PYGL, GLUL and GLUD1; these interactions result in activation of these metabolic enzymes. Interacts with BIRC2/c-IAP1, BIRC3/c-IAP2 and XIAP/BIRC4. Interacts with ARHGEF2. Interacts with PELI1 (via atypical FHA domain); the phosphorylated form at Thr-185 binds preferentially to PELI1. Interacts with BUB1B, TRAF2 and STUB1. Interacts with CASP6. Component of the AIM2 PANoptosome complex, a multiprotein complex that drives inflammatory cell death (PANoptosis). In terms of processing, RIPK1 and RIPK3 undergo reciprocal auto- and trans-phosphorylation. Autophosphorylated following interaction with ZBP1. Phosphorylation of Ser-201 plays a role in the necroptotic function of RIPK3. Autophosphorylates at Thr-228 and Ser-229 following activation by ZBP1: phosphorylation at these sites is a hallmark of necroptosis and is required for binding MLKL. Phosphorylation at Thr-185 is important for its kinase activity, interaction with PELI1 and for its ability to mediate TNF-induced necroptosis. Post-translationally, polyubiquitinated with 'Lys-48' and 'Lys-63'-linked chains by BIRC2/c-IAP1 and BIRC3/c-IAP2, leading to activation of NF-kappa-B. Ubiquitinated by STUB1 leading to its subsequent proteasome-dependent degradation.

It localises to the cytoplasm. It is found in the cytosol. The protein localises to the nucleus. The catalysed reaction is L-seryl-[protein] + ATP = O-phospho-L-seryl-[protein] + ADP + H(+). It catalyses the reaction L-threonyl-[protein] + ATP = O-phospho-L-threonyl-[protein] + ADP + H(+). With respect to regulation, activity is stimulated by ZBP1, which senses double-stranded Z-RNA structures. RIPK3-dependent necroptosis is inhibited by RIPK1: RIPK1 prevents the ZBP1-induced activation of RIPK3 via FADD-mediated recruitment of CASP8, which cleaves RIPK1 and limits TNF-induced necroptosis. In terms of biological role, serine/threonine-protein kinase that activates necroptosis and apoptosis, two parallel forms of cell death. Necroptosis, a programmed cell death process in response to death-inducing TNF-alpha family members, is triggered by RIPK3 following activation by ZBP1. Activated RIPK3 forms a necrosis-inducing complex and mediates phosphorylation of MLKL, promoting MLKL localization to the plasma membrane and execution of programmed necrosis characterized by calcium influx and plasma membrane damage. In addition to TNF-induced necroptosis, necroptosis can also take place in the nucleus in response to orthomyxoviruses infection: following ZBP1 activation, which senses double-stranded Z-RNA structures, nuclear RIPK3 catalyzes phosphorylation and activation of MLKL, promoting disruption of the nuclear envelope and leakage of cellular DNA into the cytosol. Also regulates apoptosis: apoptosis depends on RIPK1, FADD and CASP8, and is independent of MLKL and RIPK3 kinase activity. Phosphorylates RIPK1: RIPK1 and RIPK3 undergo reciprocal auto- and trans-phosphorylation. In some cell types, also able to restrict viral replication by promoting cell death-independent responses. In response to flavivirus infection in neurons, promotes a cell death-independent pathway that restricts viral replication: together with ZBP1, promotes a death-independent transcriptional program that modifies the cellular metabolism via up-regulation expression of the enzyme ACOD1/IRG1 and production of the metabolite itaconate. Itaconate inhibits the activity of succinate dehydrogenase, generating a metabolic state in neurons that suppresses replication of viral genomes. RIPK3 binds to and enhances the activity of three metabolic enzymes: GLUL, GLUD1, and PYGL. These metabolic enzymes may eventually stimulate the tricarboxylic acid cycle and oxidative phosphorylation, which could result in enhanced ROS production. The chain is Receptor-interacting serine/threonine-protein kinase 3 from Rattus norvegicus (Rat).